We begin with the raw amino-acid sequence, 85 residues long: Cell division topological specificity factor (85 aa).

This sequence belongs to the MinE family.

Its function is as follows. Prevents the cell division inhibition by proteins MinC and MinD at internal division sites while permitting inhibition at polar sites. This ensures cell division at the proper site by restricting the formation of a division septum at the midpoint of the long axis of the cell. The polypeptide is Cell division topological specificity factor (Shewanella sp. (strain ANA-3)).